We begin with the raw amino-acid sequence, 75 residues long: MPVDVAPGVIKKLMFFTAAMVICPLLTFFSIKQFTTNTIVSGGLAALAANLVLIGYIVVAFMEDTTDVKAESKKD.

The Cytoplasmic portion of the chain corresponds to 1–8 (MPVDVAPG). A helical membrane pass occupies residues 9-29 (VIKKLMFFTAAMVICPLLTFF). The Lumenal portion of the chain corresponds to 30-41 (SIKQFTTNTIVS). Residues 42 to 62 (GGLAALAANLVLIGYIVVAFM) traverse the membrane as a helical segment. The Cytoplasmic segment spans residues 63-75 (EDTTDVKAESKKD).

Belongs to the VMA21 family.

It localises to the endoplasmic reticulum membrane. The protein localises to the endoplasmic reticulum-Golgi intermediate compartment membrane. The protein resides in the cytoplasmic vesicle. It is found in the COPII-coated vesicle membrane. Its function is as follows. Required for the assembly of the V0 complex of the vacuolar ATPase (V-ATPase) in the endoplasmic reticulum. The protein is Vacuolar ATPase assembly integral membrane protein VMA21 of Vanderwaltozyma polyspora (strain ATCC 22028 / DSM 70294 / BCRC 21397 / CBS 2163 / NBRC 10782 / NRRL Y-8283 / UCD 57-17) (Kluyveromyces polysporus).